Here is a 128-residue protein sequence, read N- to C-terminus: Large ribosomal subunit protein bL12 (128 aa).

This sequence belongs to the bacterial ribosomal protein bL12 family. Homodimer. Part of the ribosomal stalk of the 50S ribosomal subunit. Forms a multimeric L10(L12)X complex, where L10 forms an elongated spine to which 2 to 4 L12 dimers bind in a sequential fashion. Binds GTP-bound translation factors.

Functionally, forms part of the ribosomal stalk which helps the ribosome interact with GTP-bound translation factors. Is thus essential for accurate translation. In Halorhodospira halophila (strain DSM 244 / SL1) (Ectothiorhodospira halophila (strain DSM 244 / SL1)), this protein is Large ribosomal subunit protein bL12.